Consider the following 332-residue polypeptide: Biotin synthase (332 aa).

The Radical SAM core domain occupies 53–282; the sequence is HFGKKVKLNM…TKEIRISGGR (230 aa). Positions 71, 75, and 78 each coordinate [4Fe-4S] cluster. [2Fe-2S] cluster contacts are provided by Cys-115, Cys-147, Cys-207, and Arg-277.

The protein belongs to the radical SAM superfamily. Biotin synthase family. Homodimer. [4Fe-4S] cluster is required as a cofactor. [2Fe-2S] cluster serves as cofactor.

The catalysed reaction is (4R,5S)-dethiobiotin + (sulfur carrier)-SH + 2 reduced [2Fe-2S]-[ferredoxin] + 2 S-adenosyl-L-methionine = (sulfur carrier)-H + biotin + 2 5'-deoxyadenosine + 2 L-methionine + 2 oxidized [2Fe-2S]-[ferredoxin]. It functions in the pathway cofactor biosynthesis; biotin biosynthesis; biotin from 7,8-diaminononanoate: step 2/2. Functionally, catalyzes the conversion of dethiobiotin (DTB) to biotin by the insertion of a sulfur atom into dethiobiotin via a radical-based mechanism. This is Biotin synthase from Bacillus mycoides (strain KBAB4) (Bacillus weihenstephanensis).